The chain runs to 179 residues: Protein GrpE (179 aa).

Positions 1–22 (MTDNNIENNEEEIRKAPSANDR) are disordered. Basic and acidic residues predominate over residues 11–22 (EEIRKAPSANDR).

The protein belongs to the GrpE family. As to quaternary structure, homodimer.

It is found in the cytoplasm. In terms of biological role, participates actively in the response to hyperosmotic and heat shock by preventing the aggregation of stress-denatured proteins, in association with DnaK and GrpE. It is the nucleotide exchange factor for DnaK and may function as a thermosensor. Unfolded proteins bind initially to DnaJ; upon interaction with the DnaJ-bound protein, DnaK hydrolyzes its bound ATP, resulting in the formation of a stable complex. GrpE releases ADP from DnaK; ATP binding to DnaK triggers the release of the substrate protein, thus completing the reaction cycle. Several rounds of ATP-dependent interactions between DnaJ, DnaK and GrpE are required for fully efficient folding. In Rickettsia canadensis (strain McKiel), this protein is Protein GrpE.